The sequence spans 492 residues: Ketol-acid reductoisomerase (NADP(+)) (492 aa).

One can recognise a KARI N-terminal Rossmann domain in the interval 15-208 (AQLGKCRFMA…GGHRAGVLES (194 aa)). Residues 45–48 (CGAQ), Arg68, Arg76, Ser78, and 108–110 (DKQ) contribute to the NADP(+) site. His132 is an active-site residue. Gly158 is an NADP(+) binding site. KARI C-terminal knotted domains are found at residues 209-344 (SFVA…TAAQ) and 345-485 (FEGK…MTDM). Mg(2+) is bound by residues Asp217, Glu221, Glu389, and Glu393. Ser414 is a binding site for substrate.

It belongs to the ketol-acid reductoisomerase family. It depends on Mg(2+) as a cofactor.

The enzyme catalyses (2R)-2,3-dihydroxy-3-methylbutanoate + NADP(+) = (2S)-2-acetolactate + NADPH + H(+). It catalyses the reaction (2R,3R)-2,3-dihydroxy-3-methylpentanoate + NADP(+) = (S)-2-ethyl-2-hydroxy-3-oxobutanoate + NADPH + H(+). It functions in the pathway amino-acid biosynthesis; L-isoleucine biosynthesis; L-isoleucine from 2-oxobutanoate: step 2/4. Its pathway is amino-acid biosynthesis; L-valine biosynthesis; L-valine from pyruvate: step 2/4. Involved in the biosynthesis of branched-chain amino acids (BCAA). Catalyzes an alkyl-migration followed by a ketol-acid reduction of (S)-2-acetolactate (S2AL) to yield (R)-2,3-dihydroxy-isovalerate. In the isomerase reaction, S2AL is rearranged via a Mg-dependent methyl migration to produce 3-hydroxy-3-methyl-2-ketobutyrate (HMKB). In the reductase reaction, this 2-ketoacid undergoes a metal-dependent reduction by NADPH to yield (R)-2,3-dihydroxy-isovalerate. The chain is Ketol-acid reductoisomerase (NADP(+)) from Erwinia tasmaniensis (strain DSM 17950 / CFBP 7177 / CIP 109463 / NCPPB 4357 / Et1/99).